Consider the following 484-residue polypeptide: Glutamyl-tRNA(Gln) amidotransferase subunit A (484 aa).

Catalysis depends on charge relay system residues Lys-74 and Ser-149. The Acyl-ester intermediate role is filled by Ser-173.

Belongs to the amidase family. GatA subfamily. Heterotrimer of A, B and C subunits.

The catalysed reaction is L-glutamyl-tRNA(Gln) + L-glutamine + ATP + H2O = L-glutaminyl-tRNA(Gln) + L-glutamate + ADP + phosphate + H(+). Allows the formation of correctly charged Gln-tRNA(Gln) through the transamidation of misacylated Glu-tRNA(Gln) in organisms which lack glutaminyl-tRNA synthetase. The reaction takes place in the presence of glutamine and ATP through an activated gamma-phospho-Glu-tRNA(Gln). In Prochlorococcus marinus subsp. pastoris (strain CCMP1986 / NIES-2087 / MED4), this protein is Glutamyl-tRNA(Gln) amidotransferase subunit A.